Consider the following 246-residue polypeptide: mRNA-decapping protein g5R (246 aa).

Positions 93–239 (QKFRKNWLLP…IIGPAFNFIK (147 aa)) constitute a Nudix hydrolase domain. A Nudix box motif is present at residues 128–149 (GKPKEDESDLTCAIREFEEETG). Mg(2+) is bound at residue glutamate 134. Glutamate 143 acts as the Nucleophile in catalysis. Residues glutamate 147 and aspartate 169 each contribute to the Mg(2+) site.

Belongs to the Nudix hydrolase family. DIPP subfamily. As to quaternary structure, interacts with host RPL23A. It depends on Mg(2+) as a cofactor. Mn(2+) serves as cofactor.

It is found in the host rough endoplasmic reticulum. It carries out the reaction diphospho-myo-inositol polyphosphate + H2O = myo-inositol polyphosphate + phosphate.. Functionally, decapping enzyme required for the removal of the 5'-end m7GpppN cap tethered to viral and host mRNAs to allow their decay in cells. May therefore accelerate viral and cellular mRNA turnover to eliminate competing host mRNAs and allow stage-specific synthesis of viral proteins. Acceleration of the turnover of cellular transcripts may even promote the shutoff of host protein synthesis. In addition to the mRNA cap, g5R also efficiently hydrolyzes diphosphoinositol polyphosphates. Down-regulation of the level of PP-InsP5 (diphosphoinositol pentakisphosphate) may play a role in viral manipulation of the cellular secretory pathway, a step necessary for the formation of virions. Binds viral and cellular poly(A) mRNAs, thereby decreasing both types of mRNAs. The protein is mRNA-decapping protein g5R of African swine fever virus (isolate Warthog/Namibia/Wart80/1980) (ASFV).